The following is a 282-amino-acid chain: Bifunctional protein FolD (282 aa).

NADP(+) contacts are provided by residues 162–164 (GRS), Ser187, and Val228.

The protein belongs to the tetrahydrofolate dehydrogenase/cyclohydrolase family. Homodimer.

It catalyses the reaction (6R)-5,10-methylene-5,6,7,8-tetrahydrofolate + NADP(+) = (6R)-5,10-methenyltetrahydrofolate + NADPH. It carries out the reaction (6R)-5,10-methenyltetrahydrofolate + H2O = (6R)-10-formyltetrahydrofolate + H(+). It functions in the pathway one-carbon metabolism; tetrahydrofolate interconversion. Its function is as follows. Catalyzes the oxidation of 5,10-methylenetetrahydrofolate to 5,10-methenyltetrahydrofolate and then the hydrolysis of 5,10-methenyltetrahydrofolate to 10-formyltetrahydrofolate. The sequence is that of Bifunctional protein FolD from Thermus thermophilus (strain ATCC 27634 / DSM 579 / HB8).